The sequence spans 384 residues: Multidrug/solvent efflux pump periplasmic linker protein MepA (384 aa).

The first 22 residues, 1–22 (MQFKPAVTALVSAVALATLLSG), serve as a signal peptide directing secretion. A lipid anchor (N-palmitoyl cysteine) is attached at C23. C23 is lipidated: S-diacylglycerol cysteine. A coiled-coil region spans residues 115–155 (LAERYKQLIDEQAVSKQEYDDANAKRLQAEASLKSAQIDLR). The disordered stretch occupies residues 362–384 (ATNVKKPAGPDQANAAKADAKAE). Low complexity predominate over residues 368-378 (PAGPDQANAAK).

This sequence belongs to the membrane fusion protein (MFP) (TC 8.A.1) family.

It localises to the cell inner membrane. Functionally, the periplasmic linker protein component of an organic solvent and antibiotic efflux pump; confers resistance to toluene, hexane, p-xylene, ampicillin, penicillin G, erythromycin, novobiocin and tetracycline. This is Multidrug/solvent efflux pump periplasmic linker protein MepA (mepA) from Pseudomonas putida (Arthrobacter siderocapsulatus).